Reading from the N-terminus, the 122-residue chain is Large ribosomal subunit protein uL14 (122 aa).

It belongs to the universal ribosomal protein uL14 family. As to quaternary structure, part of the 50S ribosomal subunit. Forms a cluster with proteins L3 and L19. In the 70S ribosome, L14 and L19 interact and together make contacts with the 16S rRNA in bridges B5 and B8.

Binds to 23S rRNA. Forms part of two intersubunit bridges in the 70S ribosome. The sequence is that of Large ribosomal subunit protein uL14 from Parvibaculum lavamentivorans (strain DS-1 / DSM 13023 / NCIMB 13966).